Reading from the N-terminus, the 200-residue chain is Pyrrolidone-carboxylate peptidase (200 aa).

Catalysis depends on residues Glu78, Cys141, and His165.

This sequence belongs to the peptidase C15 family. In terms of assembly, homotetramer.

The protein resides in the cytoplasm. The catalysed reaction is Release of an N-terminal pyroglutamyl group from a polypeptide, the second amino acid generally not being Pro.. Functionally, removes 5-oxoproline from various penultimate amino acid residues except L-proline. The sequence is that of Pyrrolidone-carboxylate peptidase from Lactobacillus helveticus (strain DPC 4571).